Here is a 293-residue protein sequence, read N- to C-terminus: Nucleotide-binding protein Bcer98_3698 (293 aa).

14-21 (GMSGAGKT) provides a ligand contact to ATP. Residue 65-68 (DLRG) coordinates GTP.

The protein belongs to the RapZ-like family.

Displays ATPase and GTPase activities. The protein is Nucleotide-binding protein Bcer98_3698 of Bacillus cytotoxicus (strain DSM 22905 / CIP 110041 / 391-98 / NVH 391-98).